A 262-amino-acid polypeptide reads, in one-letter code: Ferric siderophore reductase (262 aa).

Residues Cys-244, Cys-245, Cys-256, and Cys-259 each coordinate [2Fe-2S] cluster.

In terms of assembly, monomer. [2Fe-2S] cluster is required as a cofactor.

It localises to the cytoplasm. The protein localises to the cell inner membrane. Its activity is regulated as follows. Displays pH dependent redox properties. SufD is necessary for the stability of FhuF. Functionally, siderophore-iron reductase which is involved in iron removal from the hydroxamate-type siderophores coprogen, ferrichrome and ferrioxamine B after their transport into the cell. Binds both the iron-loaded and the apo forms of ferrichrome. The sequence is that of Ferric siderophore reductase (fhuF) from Escherichia coli (strain K12).